A 537-amino-acid polypeptide reads, in one-letter code: Lysine--tRNA ligase (537 aa).

Positions 30 to 38 (PSGNIHIGN) match the 'HIGH' region motif. The short motif at 276–280 (AMSSS) is the 'KMSKS' region element.

The protein belongs to the class-I aminoacyl-tRNA synthetase family.

It is found in the cytoplasm. It catalyses the reaction tRNA(Lys) + L-lysine + ATP = L-lysyl-tRNA(Lys) + AMP + diphosphate. The protein is Lysine--tRNA ligase of Methanosarcina barkeri (strain Fusaro / DSM 804).